We begin with the raw amino-acid sequence, 250 residues long: Ubiquinone/menaquinone biosynthesis C-methyltransferase UbiE (250 aa).

Residues S73, D94, and 122-123 (NA) each bind S-adenosyl-L-methionine.

This sequence belongs to the class I-like SAM-binding methyltransferase superfamily. MenG/UbiE family.

It catalyses the reaction a 2-demethylmenaquinol + S-adenosyl-L-methionine = a menaquinol + S-adenosyl-L-homocysteine + H(+). The enzyme catalyses a 2-methoxy-6-(all-trans-polyprenyl)benzene-1,4-diol + S-adenosyl-L-methionine = a 5-methoxy-2-methyl-3-(all-trans-polyprenyl)benzene-1,4-diol + S-adenosyl-L-homocysteine + H(+). It functions in the pathway quinol/quinone metabolism; menaquinone biosynthesis; menaquinol from 1,4-dihydroxy-2-naphthoate: step 2/2. Its pathway is cofactor biosynthesis; ubiquinone biosynthesis. Methyltransferase required for the conversion of demethylmenaquinol (DMKH2) to menaquinol (MKH2) and the conversion of 2-polyprenyl-6-methoxy-1,4-benzoquinol (DDMQH2) to 2-polyprenyl-3-methyl-6-methoxy-1,4-benzoquinol (DMQH2). The polypeptide is Ubiquinone/menaquinone biosynthesis C-methyltransferase UbiE (Legionella pneumophila (strain Corby)).